The primary structure comprises 98 residues: Major carboxysome shell protein CsoS1A (98 aa).

A BMC domain is found at 8–93; it reads ALGMIETRGL…VHSEVENILP (86 aa).

It belongs to the bacterial microcompartments protein family. CsoS1 subfamily. Homohexamer with a small central pore; the concave side is mostly positive electrostatic potential, whereas the convex side is mostly negative electrostatic potential. Forms a CsoS2-CsoS1-RuBisCO complex. Interacts with the N-terminus (residues 1-136) of RuBisCO (CbbL).

The protein localises to the carboxysome. Its function is as follows. The major shell protein of the carboxysome, a polyhedral inclusion where RuBisCO (ribulose bisphosphate carboxylase, ccbL-ccbS) is sequestered. Assembles into hexamers which make sheets that form the facets of the polyhedral carboxysome. The shell probably limits the diffusion of CO(2) into and out of the carboxysome. Molecular modeling shows the central pore of this protein is selectively permeable to anions such as HCO(3) rather than CO(2) or O(2). There are estimated to be 2970 CsoS1A/CsoS1C proteins per carboxysome (the proteins differ by only 1 residue). Unlike beta-carboxysomes, alpha-carboxysomes (Cb) can form without cargo protein. CsoS2 is essential for Cb formation and is also capable of targeting foreign proteins to the Cb. The Cb shell assembles with the aid of CsoS2; CsoS1A, CsoS1B and CsoS1C form the majority of the shell while CsoS4A and CsoS4B form vertices. CsoS1D forms pseudohexamers that probably control metabolite flux into and out of the shell. This Halothiobacillus neapolitanus (strain ATCC 23641 / c2) (Thiobacillus neapolitanus) protein is Major carboxysome shell protein CsoS1A.